We begin with the raw amino-acid sequence, 349 residues long: ATPase GET3 (349 aa).

Residue 26–33 coordinates ATP; the sequence is KGGVGKTT. Asp57 is a catalytic residue. Glu240 and Asn267 together coordinate ATP. Residues Cys280 and Cys283 each coordinate Zn(2+).

Belongs to the arsA ATPase family. Homodimer. Component of the Golgi to ER traffic (GET) complex, which is composed of GET1, GET2 and GET3. Within the complex, GET1 and GET2 form a heterotetramer which is stabilized by phosphatidylinositol binding and which binds to the GET3 homodimer. Interacts with the chloride channel protein GEF1.

It localises to the cytoplasm. Its subcellular location is the endoplasmic reticulum. It is found in the golgi apparatus. ATPase required for the post-translational delivery of tail-anchored (TA) proteins to the endoplasmic reticulum. Recognizes and selectively binds the transmembrane domain of TA proteins in the cytosol. This complex then targets to the endoplasmic reticulum by membrane-bound receptors GET1 and GET2, where the tail-anchored protein is released for insertion. This process is regulated by ATP binding and hydrolysis. ATP binding drives the homodimer towards the closed dimer state, facilitating recognition of newly synthesized TA membrane proteins. ATP hydrolysis is required for insertion. Subsequently, the homodimer reverts towards the open dimer state, lowering its affinity for the GET1-GET2 receptor, and returning it to the cytosol to initiate a new round of targeting. Cooperates with the HDEL receptor ERD2 to mediate the ATP-dependent retrieval of resident ER proteins that contain a C-terminal H-D-E-L retention signal from the Golgi to the ER. Involved in low-level resistance to the oxyanions arsenite and arsenate, and in heat tolerance. In Lachancea thermotolerans (strain ATCC 56472 / CBS 6340 / NRRL Y-8284) (Yeast), this protein is ATPase GET3.